Here is a 201-residue protein sequence, read N- to C-terminus: Recombination protein RecR (201 aa).

The C4-type zinc finger occupies 60 to 75; the sequence is CKYCQSLTEKDVCDIC. Residues 83-177 enclose the Toprim domain; sequence SKLCIIESML…KISRIGFGVP (95 aa).

It belongs to the RecR family.

In terms of biological role, may play a role in DNA repair. It seems to be involved in an RecBC-independent recombinational process of DNA repair. It may act with RecF and RecO. The chain is Recombination protein RecR from Francisella philomiragia subsp. philomiragia (strain ATCC 25017 / CCUG 19701 / FSC 153 / O#319-036).